The following is a 294-amino-acid chain: Bifunctional protein FolD (294 aa).

NADP(+) contacts are provided by residues 166-168, Ser-191, and Ile-232; that span reads GRS.

The protein belongs to the tetrahydrofolate dehydrogenase/cyclohydrolase family. Homodimer.

The catalysed reaction is (6R)-5,10-methylene-5,6,7,8-tetrahydrofolate + NADP(+) = (6R)-5,10-methenyltetrahydrofolate + NADPH. It catalyses the reaction (6R)-5,10-methenyltetrahydrofolate + H2O = (6R)-10-formyltetrahydrofolate + H(+). The protein operates within one-carbon metabolism; tetrahydrofolate interconversion. In terms of biological role, catalyzes the oxidation of 5,10-methylenetetrahydrofolate to 5,10-methenyltetrahydrofolate and then the hydrolysis of 5,10-methenyltetrahydrofolate to 10-formyltetrahydrofolate. This Bradyrhizobium diazoefficiens (strain JCM 10833 / BCRC 13528 / IAM 13628 / NBRC 14792 / USDA 110) protein is Bifunctional protein FolD.